A 559-amino-acid chain; its full sequence is Endoglin (559 aa).

An N-terminal signal peptide occupies residues 1 to 20 (MKSICCVLVLCLLLCRRSTA). Residues 21 to 473 (SESICELKDV…SCFEFGLSAV (453 aa)) lie on the Extracellular side of the membrane. Disulfide bonds link C25-C201 and C47-C174. N55, N79, N109, N133, N170, N302, and N352 each carry an N-linked (GlcNAc...) asparagine glycan. Cysteines 381 and 427 form a disulfide. Residues 474–494 (LGIAFGGFLIGVLLTGALWFI) form a helical membrane-spanning segment. The Cytoplasmic segment spans residues 495–559 (KIRTGHPVAL…TQSTPTSSMA (65 aa)). The interval 528–559 (RQPVPTHPSPSENSSANASIGSTQSTPTSSMA) is disordered. Residues 536–546 (SPSENSSANAS) are compositionally biased toward low complexity. Positions 547 to 559 (IGSTQSTPTSSMA) are enriched in polar residues.

As to quaternary structure, homodimer; disulfide-linked.

It is found in the cell membrane. Functionally, vascular endothelium glycoprotein that plays an important role in the regulation of angiogenesis. Required for normal structure and integrity of adult vasculature. Important for endothelial cell shape changes in response to blood flow, which drive vascular remodeling and establishment of normal vascular morphology during angiogenesis. This is Endoglin from Danio rerio (Zebrafish).